Here is a 114-residue protein sequence, read N- to C-terminus: Iron-sulfur cluster insertion protein ErpA (114 aa).

Iron-sulfur cluster is bound by residues Cys42, Cys106, and Cys108.

The protein belongs to the HesB/IscA family. Homodimer. The cofactor is iron-sulfur cluster.

Its function is as follows. Required for insertion of 4Fe-4S clusters for at least IspG. This is Iron-sulfur cluster insertion protein ErpA from Cronobacter sakazakii (strain ATCC BAA-894) (Enterobacter sakazakii).